We begin with the raw amino-acid sequence, 339 residues long: Type IV secretion system protein PtlH homolog (339 aa).

This sequence belongs to the GSP E family.

The chain is Type IV secretion system protein PtlH homolog (ptlH) from Bordetella parapertussis (strain 12822 / ATCC BAA-587 / NCTC 13253).